A 387-amino-acid polypeptide reads, in one-letter code: Succinate--CoA ligase [ADP-forming] subunit beta (387 aa).

One can recognise an ATP-grasp domain in the interval Lys-9–Lys-245. ATP-binding positions include Lys-46, Gly-53–Gly-55, Glu-100, Tyr-103, and Glu-108. Mg(2+) is bound by residues Asn-200 and Asp-214. Residues Asn-265 and Gly-322 to Val-324 contribute to the substrate site.

Belongs to the succinate/malate CoA ligase beta subunit family. In terms of assembly, heterotetramer of two alpha and two beta subunits. It depends on Mg(2+) as a cofactor.

The enzyme catalyses succinate + ATP + CoA = succinyl-CoA + ADP + phosphate. It carries out the reaction GTP + succinate + CoA = succinyl-CoA + GDP + phosphate. It participates in carbohydrate metabolism; tricarboxylic acid cycle; succinate from succinyl-CoA (ligase route): step 1/1. Its function is as follows. Succinyl-CoA synthetase functions in the citric acid cycle (TCA), coupling the hydrolysis of succinyl-CoA to the synthesis of either ATP or GTP and thus represents the only step of substrate-level phosphorylation in the TCA. The beta subunit provides nucleotide specificity of the enzyme and binds the substrate succinate, while the binding sites for coenzyme A and phosphate are found in the alpha subunit. The polypeptide is Succinate--CoA ligase [ADP-forming] subunit beta (Francisella tularensis subsp. tularensis (strain FSC 198)).